A 351-amino-acid polypeptide reads, in one-letter code: Biotin synthase (351 aa).

The Radical SAM core domain maps to 49-265 (NRVRIHILDN…LSVFRLVNPD (217 aa)). Residues Cys64, Cys68, and Cys71 each coordinate [4Fe-4S] cluster. 4 residues coordinate [2Fe-2S] cluster: Cys108, Cys140, Cys200, and Arg269.

This sequence belongs to the radical SAM superfamily. Biotin synthase family. In terms of assembly, homodimer. Requires [4Fe-4S] cluster as cofactor. It depends on [2Fe-2S] cluster as a cofactor.

It catalyses the reaction (4R,5S)-dethiobiotin + (sulfur carrier)-SH + 2 reduced [2Fe-2S]-[ferredoxin] + 2 S-adenosyl-L-methionine = (sulfur carrier)-H + biotin + 2 5'-deoxyadenosine + 2 L-methionine + 2 oxidized [2Fe-2S]-[ferredoxin]. It functions in the pathway cofactor biosynthesis; biotin biosynthesis; biotin from 7,8-diaminononanoate: step 2/2. Its function is as follows. Catalyzes the conversion of dethiobiotin (DTB) to biotin by the insertion of a sulfur atom into dethiobiotin via a radical-based mechanism. The protein is Biotin synthase of Leptospira biflexa serovar Patoc (strain Patoc 1 / Ames).